Consider the following 1058-residue polypeptide: COP1-interacting protein 7 (1058 aa).

3 disordered regions span residues L123–V147, H262–R281, and M330–N463. 2 stretches are compositionally biased toward polar residues: residues T126–S136 and H262–T276. The short motif at S340 to K347 is the Nuclear localization signal 1 element. Residues S340–S353 are compositionally biased toward basic residues. Positions D403 to V414 are enriched in acidic residues. The short motif at E431–S438 is the Nuclear localization signal 2 element. The span at R432–S446 shows a compositional bias: basic residues. A compositionally biased stretch (basic and acidic residues) spans H447–D462. S477 carries the phosphoserine modification. Positions A708–S887 are disordered. Over residues S757 to L773 the composition is skewed to basic and acidic residues. A Nuclear localization signal 3 motif is present at residues E764–E771. The segment covering K783–S808 has biased composition (low complexity). Basic and acidic residues-rich tracts occupy residues K860 to S869 and K878 to S887. Phosphoserine occurs at positions 915, 986, and 992. Positions S1020–P1041 are disordered. The span at E1026–S1040 shows a compositional bias: basic and acidic residues.

As to quaternary structure, interacts with COP1.

The protein localises to the nucleus. Exhibits transcriptional activation activity. Positive regulator of light-regulated genes, probably being a direct downstream target of COP1 for mediating light control of gene expression. This Arabidopsis thaliana (Mouse-ear cress) protein is COP1-interacting protein 7.